Consider the following 476-residue polypeptide: MTMGLRAPHWVAVGLLTWAALGLLVAGHEGHGDLHKDVEEDFHGHSHGHSHEDFHHGHSHGHSHEDFHHGHGHTHESIWHGHAHSHDHGHSREELHHGHSHGHSHDSLHHGGHGHAHREHSHGTSREAGAPGIKHHLDTVTLWAYALGATVLISAAPFFVLFLIPVESNSPRHRSLLQILLSFASGGLLGDAFLHLIPHALEPHSHHAPEQPGHGHSHSGQGPILSVGLWVLSGIVAFLVVEKFVRHVKGGHGHSHGHGDRHAHGDSHTHGDRHECSSKEKPSTEEEKEVGGLRKRRGGNTGPRDGPVKPQSPEEEKAGSDLRVSGYLNLAADLAHNFTDGLAIGASFRGGRGLGILTTMTVLLHEVPHEVGDFAILVQSGCSKKQAMRLQLVTAIGALAGTACALLTEGGAVDSDVAGGAGPGWVLPFTAGGFIYVATVSVLPELLREASPLQSLLEVLGLLGGVAMMVLIAHLE.

A helical membrane pass occupies residues 7–27 (APHWVAVGLLTWAALGLLVAG). The segment covering 35-109 (HKDVEEDFHG…SHGHSHDSLH (75 aa)) has biased composition (basic and acidic residues). The tract at residues 35–131 (HKDVEEDFHG…HGTSREAGAP (97 aa)) is disordered. The residue at position 73 (His73) is a Pros-methylhistidine. Basic residues predominate over residues 110–120 (HGGHGHAHREH). 3 helical membrane-spanning segments follow: residues 146 to 166 (ALGA…LIPV), 177 to 197 (LQIL…LHLI), and 222 to 242 (GPIL…LVVE). Residues 249–320 (KGGHGHSHGH…QSPEEEKAGS (72 aa)) form a disordered region. The segment covering 257–292 (GHGDRHAHGDSHTHGDRHECSSKEKPSTEEEKEVGG) has biased composition (basic and acidic residues). A Phosphoserine modification is found at Ser283. 2 helical membrane passes run 393–413 (VTAI…GGAV) and 417–437 (VAGG…FIYV).

The protein belongs to the ZIP transporter (TC 2.A.5) family. KE4/Catsup subfamily. As to quaternary structure, homodimer. Post-translationally, methylation at some His residue by METTL9 leads to reduced zinc-binding. In terms of processing, rapidly phosphorylated by CK2 following Zn(2+) treatment. This phosphorylation is required for efficient cytosolic Zn(2+) release. In terms of tissue distribution, widely expressed. Highly expressed in the intestinal crypts.

The protein resides in the endoplasmic reticulum membrane. Its subcellular location is the golgi apparatus. The protein localises to the cis-Golgi network membrane. It catalyses the reaction Zn(2+)(in) = Zn(2+)(out). Its function is as follows. Transports Zn(2+) from the endoplasmic reticulum (ER)/Golgi apparatus to the cytosol, playing an essential role in the regulation of cytosolic zinc levels. Acts as a gatekeeper of zinc release from intracellular stores, requiring post-translational activation by phosphorylation, resulting in activation of multiple downstream pathways leading to cell growth and proliferation. Has an essential role in B cell development and is required for proper B cell receptor signaling. Plays an important role in maintaining intestinal epithelial homeostasis and skin dermis development by regulating ER function. Controls cell signaling pathways involved in glucose metabolism in skeletal muscle. Has a protective role against ER stress in different biological contexts. Mediates Zn(2+)-induced ferroptosis. This is Zinc transporter SLC39A7 (Slc39a7) from Mus musculus (Mouse).